A 179-amino-acid polypeptide reads, in one-letter code: Large ribosomal subunit protein uL5 (179 aa).

This sequence belongs to the universal ribosomal protein uL5 family. As to quaternary structure, part of the 50S ribosomal subunit; part of the 5S rRNA/L5/L18/L25 subcomplex. Contacts the 5S rRNA and the P site tRNA. Forms a bridge to the 30S subunit in the 70S ribosome.

In terms of biological role, this is one of the proteins that bind and probably mediate the attachment of the 5S RNA into the large ribosomal subunit, where it forms part of the central protuberance. In the 70S ribosome it contacts protein S13 of the 30S subunit (bridge B1b), connecting the 2 subunits; this bridge is implicated in subunit movement. Contacts the P site tRNA; the 5S rRNA and some of its associated proteins might help stabilize positioning of ribosome-bound tRNAs. This is Large ribosomal subunit protein uL5 from Xylella fastidiosa (strain M23).